We begin with the raw amino-acid sequence, 979 residues long: Collagen alpha-2(I) chain (979 aa).

The segment at 1–979 is disordered; sequence SGGFDFSFLP…FGYEGDFYRA (979 aa). Residues proline 10, proline 13, proline 35, and proline 41 each carry the 4-hydroxyproline modification. Residues 28–41 show a composition bias toward low complexity; the sequence is LMGPRGPPGASGAP. Position 88 is a 5-hydroxylysine; alternate (lysine 88). Lysine 88 carries an O-linked (Gal...) hydroxylysine; alternate glycan. Residues 128–157 are compositionally biased toward low complexity; it reads VGAPGPAGARGSDGSVGPVGPAGPIGSAGP. The span at 256 to 265 shows a compositional bias: gly residues; it reads GESGGKGEPG. Residues 266–276 show a composition bias toward low complexity; sequence SAGPQGPPGSS. Residues 298 to 307 show a composition bias toward gly residues; it reads GLRGGPGSRG. 4-hydroxyproline occurs at positions 341 and 344. Positions 434-443 are enriched in gly residues; that stretch reads GVQGGKGEQG. Low complexity-rich tracts occupy residues 490-507 and 519-529; these read PGES…SRGP and EPGVVGAPGTA. Over residues 530 to 548 the composition is skewed to gly residues; that stretch reads GPAGSGGPGERGAAGIPGG. 2 stretches are compositionally biased toward low complexity: residues 570-599 and 606-626; these read RGAP…PRGS and VGPA…QPGA. The span at 627–636 shows a compositional bias: basic and acidic residues; sequence KGERGTKGPK. Residues 644–654 are compositionally biased toward low complexity; sequence PTGPVGSAGPA. Over residues 664-673 the composition is skewed to gly residues; sequence GSRGDGGPPG. Residues 675 to 684 are compositionally biased toward low complexity; it reads TGFPGAAGRT. Positions 721–730 are enriched in gly residues; that stretch reads GETGAGGPPG. Composition is skewed to low complexity over residues 738–765 and 773–783; these read SGEP…LGLP and LPGVAGAVGEP. Over residues 784-802 the composition is skewed to gly residues; that stretch reads GPLGIGPPGARGPSGGDGL. 2 stretches are compositionally biased toward low complexity: residues 811–833 and 841–856; these read YAGN…VGPA and EPGP…ALGP. The segment covering 866 to 877 has biased composition (basic and acidic residues); that stretch reads RGDKGEPGDKGP. A compositionally biased stretch (pro residues) spans 951–961; the sequence is GPGPPGPPGPP.

Belongs to the fibrillar collagen family. Trimers of one alpha 2(I) and two alpha 1(I) chains. Interacts (via C-terminus) with TMEM131 (via PapD-L domain); the interaction is direct and is involved in assembly and TRAPPIII ER-to-Golgi transport complex-dependent secretion of collagen. In terms of processing, prolines at the third position of the tripeptide repeating unit (G-X-Y) are hydroxylated in some or all of the chains. As to expression, expressed in bones.

It is found in the secreted. The protein resides in the extracellular space. The protein localises to the extracellular matrix. Type I collagen is a member of group I collagen (fibrillar forming collagen). This chain is Collagen alpha-2(I) chain, found in Neocnus dousman (Slow ground sloth).